The following is a 72-amino-acid chain: Heat-stable enterotoxin A2 (72 aa).

The first 19 residues, 1–19 (MKKSILFIFLSVLSFSPFA), serve as a signal peptide directing secretion. Positions 20 to 53 (QDAKPAGSSKEKITLESKKCNIVKKNNESSPESM) are excised as a propeptide. Cystine bridges form between C59/C64, C60/C68, and C63/C71.

The protein belongs to the heat-stable enterotoxin family.

The protein resides in the secreted. Functionally, toxin which activates the particulate form of guanylate cyclase and increases cyclic GMP levels within the host intestinal epithelial cells. The polypeptide is Heat-stable enterotoxin A2 (sta2) (Escherichia coli).